A 552-amino-acid chain; its full sequence is Chaperonin GroEL (552 aa).

Residues 30-33 (TLGP), Lys51, 87-91 (DGTTT), Gly415, 480-482 (NAA), and Asp496 contribute to the ATP site.

It belongs to the chaperonin (HSP60) family. As to quaternary structure, forms a cylinder of 14 subunits composed of two heptameric rings stacked back-to-back. Interacts with the co-chaperonin GroES.

The protein localises to the cytoplasm. It carries out the reaction ATP + H2O + a folded polypeptide = ADP + phosphate + an unfolded polypeptide.. Together with its co-chaperonin GroES, plays an essential role in assisting protein folding. The GroEL-GroES system forms a nano-cage that allows encapsulation of the non-native substrate proteins and provides a physical environment optimized to promote and accelerate protein folding. The sequence is that of Chaperonin GroEL from Verminephrobacter eiseniae (strain EF01-2).